The primary structure comprises 623 residues: Alpha-1,2-mannosyltransferase Alg9 (623 aa).

Transmembrane regions (helical) follow at residues leucine 152–methionine 172, leucine 193–tryptophan 223, phenylalanine 229–leucine 254, phenylalanine 266–isoleucine 284, phenylalanine 326–leucine 348, phenylalanine 360–alanine 378, isoleucine 390–phenylalanine 410, and phenylalanine 431–tyrosine 452.

This sequence belongs to the glycosyltransferase 22 family.

It localises to the endoplasmic reticulum membrane. The catalysed reaction is an alpha-D-Man-(1-&gt;2)-alpha-D-Man-(1-&gt;2)-alpha-D-Man-(1-&gt;3)-[alpha-D-Man-(1-&gt;3)-alpha-D-Man-(1-&gt;6)]-beta-D-Man-(1-&gt;4)-beta-D-GlcNAc-(1-&gt;4)-alpha-D-GlcNAc-diphospho-di-trans,poly-cis-dolichol + a di-trans,poly-cis-dolichyl beta-D-mannosyl phosphate = an alpha-D-Man-(1-&gt;2)-alpha-D-Man-(1-&gt;2)-alpha-D-Man-(1-&gt;3)-[alpha-D-Man-(1-&gt;2)-alpha-D-Man-(1-&gt;3)-alpha-D-Man-(1-&gt;6)]-beta-D-Man-(1-&gt;4)-beta-D-GlcNAc-(1-&gt;4)-alpha-D-GlcNAc-diphospho-di-trans,poly-cis-dolichol + a di-trans,poly-cis-dolichyl phosphate + H(+). It catalyses the reaction an alpha-D-Man-(1-&gt;2)-alpha-D-Man-(1-&gt;2)-alpha-D-Man-(1-&gt;3)-[alpha-D-Man-(1-&gt;2)-alpha-D-Man-(1-&gt;3)-[alpha-D-Man-(1-&gt;6)]-alpha-D-Man-(1-&gt;6)]-beta-D-Man-(1-&gt;4)-beta-D-GlcNAc-(1-&gt;4)-alpha-D-GlcNAc-diphospho-di-trans,poly-cis-dolichol + a di-trans,poly-cis-dolichyl beta-D-mannosyl phosphate = an alpha-D-Man-(1-&gt;2)-alpha-D-Man-(1-&gt;2)-alpha-D-Man-(1-&gt;3)-[alpha-D-Man-(1-&gt;2)-alpha-D-Man-(1-&gt;3)-[alpha-D-Man-(1-&gt;2)-alpha-D-Man-(1-&gt;6)]-alpha-D-Man-(1-&gt;6)]-beta-D-Man-(1-&gt;4)-beta-D-GlcNAc-(1-&gt;4)-alpha-D-GlcNAc-diphospho-di-trans,poly-cis-dolichol + a di-trans,poly-cis-dolichyl phosphate + H(+). The protein operates within protein modification; protein glycosylation. Probable alpha-1,2-mannosyltransferase involved in the N-glycosylation pathway. Probably involved in glycosylation of the TNF receptor grnd, regulating its ligand affinity. Required for normal epithelial growth and architecture. Suppressor of JNK-dependent intestinal stem cell proliferation. This is Alpha-1,2-mannosyltransferase Alg9 from Drosophila melanogaster (Fruit fly).